A 1024-amino-acid polypeptide reads, in one-letter code: Beta-galactosidase (1024 aa).

Residues Asn-103 and Asp-202 each contribute to the substrate site. Na(+) is bound at residue Asp-202. Glu-417, His-419, and Glu-462 together coordinate Mg(2+). Residues Glu-462 and 538 to 541 each bind substrate; that span reads EYAH. Glu-462 functions as the Proton donor in the catalytic mechanism. The active-site Nucleophile is the Glu-538. Asn-598 is a binding site for Mg(2+). Na(+)-binding residues include Phe-602 and Asn-605. Substrate contacts are provided by Asn-605 and Trp-1000.

The protein belongs to the glycosyl hydrolase 2 family. As to quaternary structure, homotetramer. Mg(2+) serves as cofactor. It depends on Na(+) as a cofactor.

The enzyme catalyses Hydrolysis of terminal non-reducing beta-D-galactose residues in beta-D-galactosides.. The chain is Beta-galactosidase from Escherichia coli O17:K52:H18 (strain UMN026 / ExPEC).